The sequence spans 155 residues: Ribosomal RNA large subunit methyltransferase H (155 aa).

Residues leucine 73, glycine 104, and 123-128 each bind S-adenosyl-L-methionine; that span reads LSPLTL.

The protein belongs to the RNA methyltransferase RlmH family. As to quaternary structure, homodimer.

The protein resides in the cytoplasm. It carries out the reaction pseudouridine(1915) in 23S rRNA + S-adenosyl-L-methionine = N(3)-methylpseudouridine(1915) in 23S rRNA + S-adenosyl-L-homocysteine + H(+). Its function is as follows. Specifically methylates the pseudouridine at position 1915 (m3Psi1915) in 23S rRNA. The protein is Ribosomal RNA large subunit methyltransferase H of Azotobacter vinelandii (strain DJ / ATCC BAA-1303).